Here is a 435-residue protein sequence, read N- to C-terminus: uncharacterized protein (435 aa).

12 consecutive transmembrane segments (helical) span residues leucine 26–proline 46, isoleucine 61–leucine 81, isoleucine 96–phenylalanine 116, leucine 119–phenylalanine 139, leucine 150–valine 170, valine 177–tyrosine 197, valine 242–tryptophan 262, phenylalanine 281–valine 301, phenylalanine 325–isoleucine 345, isoleucine 347–alanine 367, leucine 385–phenylalanine 405, and leucine 407–leucine 427.

The protein belongs to the major facilitator superfamily. Phthalate permease family.

The protein localises to the cell membrane. This is an uncharacterized protein from Bacillus subtilis (strain 168).